A 280-amino-acid polypeptide reads, in one-letter code: Four and a half LIM domains protein 1 (280 aa).

S2 is modified (N-acetylserine). Residue K4 is modified to N6-acetyllysine. A C4-type zinc finger spans residues 7-31; that stretch reads CHYCRDPLQGKKYVQKDGRHCCLKC. LIM zinc-binding domains follow at residues 40-92, 101-153, 162-212, and 221-276; these read CVEC…CNKC, CKGC…CVTC, CVKC…CVDC, and CAGC…CPDC. K86 is covalently cross-linked (Glycyl lysine isopeptide (Lys-Gly) (interchain with G-Cter in SUMO2)).

The protein resides in the cytoplasm. Functionally, may have an involvement in muscle development or hypertrophy. Isoform 2 binds to RBP-J and plays a negative regulatory role in the RBP-J-mediated transcription in mammalian systems. The protein is Four and a half LIM domains protein 1 (Fhl1) of Rattus norvegicus (Rat).